The sequence spans 324 residues: tRNA dimethylallyltransferase (324 aa).

15–22 is an ATP binding site; the sequence is GPTATGKS. Residue 17–22 coordinates substrate; sequence TATGKS. An interaction with substrate tRNA region spans residues 40–43; sequence DSAQ.

It belongs to the IPP transferase family. As to quaternary structure, monomer. It depends on Mg(2+) as a cofactor.

The enzyme catalyses adenosine(37) in tRNA + dimethylallyl diphosphate = N(6)-dimethylallyladenosine(37) in tRNA + diphosphate. In terms of biological role, catalyzes the transfer of a dimethylallyl group onto the adenine at position 37 in tRNAs that read codons beginning with uridine, leading to the formation of N6-(dimethylallyl)adenosine (i(6)A). This chain is tRNA dimethylallyltransferase, found in Moorella thermoacetica (strain ATCC 39073 / JCM 9320).